A 144-amino-acid chain; its full sequence is Glycine-rich protein DC9.1 (144 aa).

The chain crosses the membrane as a helical span at residues 5–25 (IFLLLGLSIAFAILISSEVAA). 11 consecutive repeat copies span residues 37–42 (GYNNGG), 43–48 (GYHNGG), 50–55 (GYNNGG), 56–61 (GYHNGG), 63–68 (GYNNGG), 69–74 (GYHNGG), 76–81 (GYNNGG), 82–87 (GYHNGG), 89–94 (GYNNGG), 102–107 (GYNNGG), and 108–113 (GHHGGG). The interval 37–113 (GYNNGGGYHN…NNGGGHHGGG (77 aa)) is 11 X 6 AA tandem repeats of G-Y-[NH]-N-G -G.

Belongs to the GRP family.

Its subcellular location is the membrane. This Daucus carota (Wild carrot) protein is Glycine-rich protein DC9.1.